Consider the following 268-residue polypeptide: uncharacterized protein (268 aa).

It to M.tuberculosis Rv0025 and Rv0026.

This is an uncharacterized protein from Mycobacterium tuberculosis (strain CDC 1551 / Oshkosh).